Here is a 482-residue protein sequence, read N- to C-terminus: GDP-D-glucose phosphorylase 1 (482 aa).

Residues 1–21 (MEPFPRILDDRLPRNMRRPRP) form a disordered region. The active-site Tele-GMP-histidine intermediate is the His-255. Positions 461–482 (MPRSPSIRHRSSTRAQSDEGSK) are disordered.

This sequence belongs to the GDPGP1 family. In terms of tissue distribution, expressed throughout the neuronal system, in the spermatheca and anterior hypodermal cells.

It localises to the cytoplasm. The catalysed reaction is GDP-alpha-D-glucose + phosphate = alpha-D-glucose 1-phosphate + GDP + H(+). In terms of biological role, specific and highly efficient GDP-D-glucose phosphorylase regulating the levels of GDP-D-glucose in cells. This Caenorhabditis elegans protein is GDP-D-glucose phosphorylase 1.